The primary structure comprises 74 residues: Protein SMIM7 homolog (74 aa).

The chain crosses the membrane as a helical span at residues 53–73 (FRAFIGLWNIFIMFLMLVFFG).

This sequence belongs to the SMIM7 family.

It is found in the membrane. This Ixodes scapularis (Black-legged tick) protein is Protein SMIM7 homolog.